Consider the following 309-residue polypeptide: ASC1-like protein 1 (309 aa).

6 consecutive transmembrane segments (helical) span residues 27–47 (FFAL…LDCF), 84–104 (CVYF…EPWF), 130–150 (AVYM…MFWE), 156–176 (FGVS…SYVF), 215–235 (FLLF…FWIL), and 260–280 (YVFN…WVLI). A TLC domain is found at 75-289 (RKFKESAWKC…IYRMLVRQIK (215 aa)).

Its subcellular location is the endoplasmic reticulum membrane. In terms of biological role, mediates resistance to sphinganine-analog mycotoxins (SAMs) by restoring the sphingolipid biosynthesis. Could salvage the transport of GPI-anchored proteins from the endoplasmic reticulum to the Golgi apparatus in ceramides-depleted cells after SAM exposure. This Oryza sativa subsp. japonica (Rice) protein is ASC1-like protein 1.